Consider the following 237-residue polypeptide: Ribonuclease PH (237 aa).

Phosphate is bound by residues R86 and 124–126 (GTR).

The protein belongs to the RNase PH family. In terms of assembly, homohexameric ring arranged as a trimer of dimers.

It catalyses the reaction tRNA(n+1) + phosphate = tRNA(n) + a ribonucleoside 5'-diphosphate. In terms of biological role, phosphorolytic 3'-5' exoribonuclease that plays an important role in tRNA 3'-end maturation. Removes nucleotide residues following the 3'-CCA terminus of tRNAs; can also add nucleotides to the ends of RNA molecules by using nucleoside diphosphates as substrates, but this may not be physiologically important. Probably plays a role in initiation of 16S rRNA degradation (leading to ribosome degradation) during starvation. The sequence is that of Ribonuclease PH from Methylorubrum extorquens (strain CM4 / NCIMB 13688) (Methylobacterium extorquens).